The sequence spans 179 residues: Large ribosomal subunit protein uL5 (179 aa).

The protein belongs to the universal ribosomal protein uL5 family. In terms of assembly, part of the 50S ribosomal subunit; part of the 5S rRNA/L5/L18/L25 subcomplex. Contacts the 5S rRNA and the P site tRNA. Forms a bridge to the 30S subunit in the 70S ribosome.

Its function is as follows. This is one of the proteins that bind and probably mediate the attachment of the 5S RNA into the large ribosomal subunit, where it forms part of the central protuberance. In the 70S ribosome it contacts protein S13 of the 30S subunit (bridge B1b), connecting the 2 subunits; this bridge is implicated in subunit movement. Contacts the P site tRNA; the 5S rRNA and some of its associated proteins might help stabilize positioning of ribosome-bound tRNAs. The chain is Large ribosomal subunit protein uL5 from Bacillus licheniformis (strain ATCC 14580 / DSM 13 / JCM 2505 / CCUG 7422 / NBRC 12200 / NCIMB 9375 / NCTC 10341 / NRRL NRS-1264 / Gibson 46).